The following is a 435-amino-acid chain: tRNA modification GTPase MnmE (435 aa).

(6S)-5-formyl-5,6,7,8-tetrahydrofolate contacts are provided by Arg24, Glu82, and Lys122. One can recognise a TrmE-type G domain in the interval 219–360 (GFIIAIAGPP…LIAEMERRLG (142 aa)). Asn229 provides a ligand contact to K(+). GTP contacts are provided by residues 229 to 234 (NAGKST), 248 to 254 (SPVPGTT), and 273 to 276 (DTAG). Residue Ser233 participates in Mg(2+) binding. Positions 248, 250, and 253 each coordinate K(+). Residue Thr254 coordinates Mg(2+). Lys435 contacts (6S)-5-formyl-5,6,7,8-tetrahydrofolate.

The protein belongs to the TRAFAC class TrmE-Era-EngA-EngB-Septin-like GTPase superfamily. TrmE GTPase family. In terms of assembly, homodimer. Heterotetramer of two MnmE and two MnmG subunits. K(+) serves as cofactor.

The protein localises to the cytoplasm. In terms of biological role, exhibits a very high intrinsic GTPase hydrolysis rate. Involved in the addition of a carboxymethylaminomethyl (cmnm) group at the wobble position (U34) of certain tRNAs, forming tRNA-cmnm(5)s(2)U34. The polypeptide is tRNA modification GTPase MnmE (Azorhizobium caulinodans (strain ATCC 43989 / DSM 5975 / JCM 20966 / LMG 6465 / NBRC 14845 / NCIMB 13405 / ORS 571)).